Here is a 380-residue protein sequence, read N- to C-terminus: D-threo-3-hydroxyaspartate dehydratase (380 aa).

Lysine 43 carries the N6-(pyridoxal phosphate)lysine modification.

It belongs to the DSD1 family. In terms of assembly, monomer. The cofactor is pyridoxal 5'-phosphate. It depends on Mn(2+) as a cofactor. Co(2+) serves as cofactor. Requires Ni(2+) as cofactor.

It carries out the reaction (3R)-3-hydroxy-D-aspartate = oxaloacetate + NH4(+). Its activity is regulated as follows. Strongly inhibited by hydroxylamine. Modestly inhibited by EDTA. Functionally, catalyzes the deamination of D-threo-3-hydroxyaspartate (D-THA). Also exhibits dehydratase activity towards L-threo-3-hydroxyaspartate (L-THA), L-erythro-3-hydroxyaspartate (L-EHA) and D-serine. In Delftia sp. (strain HT23), this protein is D-threo-3-hydroxyaspartate dehydratase (dthadh).